A 259-amino-acid polypeptide reads, in one-letter code: Steroidogenic acute regulatory-like protein 1 (259 aa).

The N-terminal stretch at 1–20 is a signal peptide; that stretch reads MTLLPFTCLILLYSLGSVMS. Residues 43 to 254 enclose the START domain; the sequence is YATALKTCGE…NRRHFQNLKA (212 aa).

The sequence is that of Steroidogenic acute regulatory-like protein 1 (strl-1) from Caenorhabditis elegans.